Here is a 215-residue protein sequence, read N- to C-terminus: Probable transaldolase (215 aa).

Catalysis depends on Lys-83, which acts as the Schiff-base intermediate with substrate.

It belongs to the transaldolase family. Type 3B subfamily.

The protein localises to the cytoplasm. It carries out the reaction D-sedoheptulose 7-phosphate + D-glyceraldehyde 3-phosphate = D-erythrose 4-phosphate + beta-D-fructose 6-phosphate. It functions in the pathway carbohydrate degradation; pentose phosphate pathway; D-glyceraldehyde 3-phosphate and beta-D-fructose 6-phosphate from D-ribose 5-phosphate and D-xylulose 5-phosphate (non-oxidative stage): step 2/3. Transaldolase is important for the balance of metabolites in the pentose-phosphate pathway. The sequence is that of Probable transaldolase from Streptococcus agalactiae serotype III (strain NEM316).